A 201-amino-acid polypeptide reads, in one-letter code: MAGSFAQLARAAEQSRDTMLVPKTALETPPLEIHTLGAEVLRQSARRIGKVTEQTRELARDMLRSMYTAKGIGLAAPQVGIHQQLLVIDLDLENAATPPLVLINPEISAASASIDTYEEGCLSIPGVYLDVVRPTAIELSFRDEMGRPRKMKADGLMARCIQHEMDHLNGVLFVDRVTDEAGLQKELKDHGFQRQHVQSVS.

Residues Cys121 and His163 each contribute to the Fe cation site. The active site involves Glu164. His167 is a Fe cation binding site.

Belongs to the polypeptide deformylase family. Requires Fe(2+) as cofactor.

It carries out the reaction N-terminal N-formyl-L-methionyl-[peptide] + H2O = N-terminal L-methionyl-[peptide] + formate. Functionally, removes the formyl group from the N-terminal Met of newly synthesized proteins. Requires at least a dipeptide for an efficient rate of reaction. N-terminal L-methionine is a prerequisite for activity but the enzyme has broad specificity at other positions. The protein is Peptide deformylase of Parasynechococcus marenigrum (strain WH8102).